Consider the following 93-residue polypeptide: YcgL domain-containing protein AHA_2135 (93 aa).

The 85-residue stretch at 1-85 (MLCAVYKSRK…PPENLLEQHK (85 aa)) folds into the YcgL domain.

The protein is YcgL domain-containing protein AHA_2135 of Aeromonas hydrophila subsp. hydrophila (strain ATCC 7966 / DSM 30187 / BCRC 13018 / CCUG 14551 / JCM 1027 / KCTC 2358 / NCIMB 9240 / NCTC 8049).